A 145-amino-acid polypeptide reads, in one-letter code: D-aminoacyl-tRNA deacylase (145 aa).

Positions 137–138 (GP) match the Gly-cisPro motif, important for rejection of L-amino acids motif.

The protein belongs to the DTD family. Homodimer.

It localises to the cytoplasm. It carries out the reaction glycyl-tRNA(Ala) + H2O = tRNA(Ala) + glycine + H(+). The catalysed reaction is a D-aminoacyl-tRNA + H2O = a tRNA + a D-alpha-amino acid + H(+). Functionally, an aminoacyl-tRNA editing enzyme that deacylates mischarged D-aminoacyl-tRNAs. Also deacylates mischarged glycyl-tRNA(Ala), protecting cells against glycine mischarging by AlaRS. Acts via tRNA-based rather than protein-based catalysis; rejects L-amino acids rather than detecting D-amino acids in the active site. By recycling D-aminoacyl-tRNA to D-amino acids and free tRNA molecules, this enzyme counteracts the toxicity associated with the formation of D-aminoacyl-tRNA entities in vivo and helps enforce protein L-homochirality. The sequence is that of D-aminoacyl-tRNA deacylase from Pseudomonas fluorescens (strain Pf0-1).